The chain runs to 284 residues: S-formylglutathione hydrolase (284 aa).

At alanine 2 the chain carries N-acetylalanine. Residues asparagine 63 and lysine 67 each contribute to the substrate site. Catalysis depends on charge relay system residues serine 152, aspartate 229, and histidine 262.

This sequence belongs to the esterase D family. As to quaternary structure, homodimer.

The catalysed reaction is S-formylglutathione + H2O = formate + glutathione + H(+). Activity toward p-nitrophenyl acetate inhibited by N-ethylmaleimide, 10-(fluoroethoxyphosphinyl)-N-(biotinamidopentyl)decanamide (FP-biotin), iodoacetamide, CuCl(2) and ZnSO(4), but not by phenylmethylsulfonyl fluoride, EDTA, Mg(2+), Mn(2+), Ca(2+) or paraoxon, an organo-phosphate inhibitor of serine hydrolases. Its function is as follows. Serine hydrolase which catalyzes the hydrolysis of S-formylglutathione to glutathione and formic acid. Also hydrolyzes S-acetylglutathione and a range of carboxyesters in vitro. Involved in the detoxification of formaldehyde. The chain is S-formylglutathione hydrolase (SFGH) from Arabidopsis thaliana (Mouse-ear cress).